We begin with the raw amino-acid sequence, 92 residues long: uncharacterized protein (92 aa).

The disordered stretch occupies residues 1–92 (MSDAAAPAQA…PSPSQQQVAA (92 aa)).

This is an uncharacterized protein from Caenorhabditis elegans.